A 276-amino-acid chain; its full sequence is NAD kinase (276 aa).

Asp61 functions as the Proton acceptor in the catalytic mechanism. NAD(+) contacts are provided by residues 61 to 62 (DG), Arg66, 135 to 136 (NE), Arg146, His163, Asp165, and Ala200.

Belongs to the NAD kinase family. The cofactor is a divalent metal cation.

It is found in the cytoplasm. The enzyme catalyses NAD(+) + ATP = ADP + NADP(+) + H(+). Its function is as follows. Involved in the regulation of the intracellular balance of NAD and NADP, and is a key enzyme in the biosynthesis of NADP. Catalyzes specifically the phosphorylation on 2'-hydroxyl of the adenosine moiety of NAD to yield NADP. This chain is NAD kinase, found in Chloroflexus aurantiacus (strain ATCC 29366 / DSM 635 / J-10-fl).